Here is a 482-residue protein sequence, read N- to C-terminus: Signal recognition particle protein (482 aa).

GTP is bound by residues 107–114, 189–193, and 247–250; these read GLQGTGKT, DTAGR, and TKLD. 2 disordered regions span residues 380–413 and 452–482; these read MTTE…TDVS and FGGQ…FGQL. Gly residues predominate over residues 452–468; it reads FGGQPGPGFRGYRGGGG. Residues 469–482 show a composition bias toward basic residues; sequence KPKKKKKKKGFGQL.

Belongs to the GTP-binding SRP family. SRP54 subfamily. Part of the signal recognition particle protein translocation system, which is composed of SRP and FtsY.

The protein localises to the cytoplasm. The catalysed reaction is GTP + H2O = GDP + phosphate + H(+). Involved in targeting and insertion of nascent membrane proteins into the cytoplasmic membrane. Binds to the hydrophobic signal sequence of the ribosome-nascent chain (RNC) as it emerges from the ribosomes. The SRP-RNC complex is then targeted to the cytoplasmic membrane where it interacts with the SRP receptor FtsY. The sequence is that of Signal recognition particle protein from Synechocystis sp. (strain ATCC 27184 / PCC 6803 / Kazusa).